Reading from the N-terminus, the 100-residue chain is Small ribosomal subunit protein uS14c (100 aa).

The protein belongs to the universal ribosomal protein uS14 family. In terms of assembly, part of the 30S ribosomal subunit.

Its subcellular location is the plastid. The protein localises to the chloroplast. Binds 16S rRNA, required for the assembly of 30S particles. This chain is Small ribosomal subunit protein uS14c, found in Zygnema circumcarinatum (Green alga).